Here is a 577-residue protein sequence, read N- to C-terminus: Type I restriction enzyme MjaVII methylase subunit (577 aa).

Residues 251-256 (EVYTPV), 281-283 (SGT), glutamate 306, and 335-336 (DS) each bind S-adenosyl-L-methionine.

This sequence belongs to the N4/N6-methyltransferase family. The type I restriction/modification system is composed of three polypeptides R, M and S.

It catalyses the reaction a 2'-deoxyadenosine in DNA + S-adenosyl-L-methionine = an N(6)-methyl-2'-deoxyadenosine in DNA + S-adenosyl-L-homocysteine + H(+). In terms of biological role, the subtype gamma methyltransferase (M) subunit of a type I restriction enzyme. The M and S subunits together form a methyltransferase (MTase) that methylates A-3 on the top and bottom strands of the sequence 5'-CAAN(7)TGG-3'. In the presence of the R subunit the complex can also act as an endonuclease, binding to the same target sequence but cutting the DNA some distance from this site. Whether the DNA is cut or modified depends on the methylation state of the target sequence. When the target site is unmodified, the DNA is cut. When the target site is hemimethylated, the complex acts as a maintenance MTase modifying the DNA so that both strands become methylated. After locating a non-methylated recognition site, the enzyme complex serves as a molecular motor that translocates DNA in an ATP-dependent manner until a collision occurs that triggers cleavage. In Methanocaldococcus jannaschii (strain ATCC 43067 / DSM 2661 / JAL-1 / JCM 10045 / NBRC 100440) (Methanococcus jannaschii), this protein is Type I restriction enzyme MjaVII methylase subunit.